The following is a 335-amino-acid chain: Zinc transporter ZIP11 (335 aa).

7 helical membrane-spanning segments follow: residues 12-32, 44-64, 72-92, 187-207, 256-278, 283-300, and 315-335; these read LLGTFFTWAMTAAGAALVFIF, LGFAAGVMLAASYWSLLAPAV, GFGAFAFFPVAVGFTLGAAFV, IALLILAITIHNIPEGLAVGV, FWYGQLSGMVEPLAGVFGAFAVV, VLPYALAFAAGAMVYVVM, and LASWASILGFVVMMSLDVGLG.

It belongs to the ZIP transporter (TC 2.A.5) family.

It localises to the cell membrane. It is found in the nucleus. The protein localises to the cytoplasm. The protein resides in the golgi apparatus. The catalysed reaction is Zn(2+)(in) = Zn(2+)(out). The enzyme catalyses Cu(2+)(in) = Cu(2+)(out). Functionally, zinc importer that regulates cytosolic zinc concentrations either via zinc influx from the extracellular compartment or efflux from intracellular organelles such as Golgi apparatus. May transport copper ions as well. The transport mechanism remains to be elucidated. The sequence is that of Zinc transporter ZIP11 (Slc39a11) from Rattus norvegicus (Rat).